The primary structure comprises 125 residues: Plastocyanin (125 aa).

Residues 1-34 (MKVLASFARRLSLFAVAAVLCVGSFFLSAAPASA) form the signal peptide. In terms of domain architecture, Plastocyanin-like spans 35–125 (QTVAIKMGAD…AGMVGKIVVQ (91 aa)). Cu cation contacts are provided by His-73, Cys-110, His-113, and Met-118.

Belongs to the plastocyanin family. Cu(2+) is required as a cofactor.

It localises to the cellular thylakoid membrane. Functionally, participates in electron transfer between P700 and the cytochrome b6-f complex in photosystem I. The protein is Plastocyanin (petE) of Synechococcus elongatus (strain ATCC 33912 / PCC 7942 / FACHB-805) (Anacystis nidulans R2).